The sequence spans 329 residues: PTS-dependent dihydroxyacetone kinase 1, dihydroxyacetone-binding subunit DhaK (329 aa).

The region spanning 7-329 (GTDQVVEQMV…LKLPVDTIAW (323 aa)) is the DhaK domain. Residues 53–56 (GSGH), lysine 104, and aspartate 109 contribute to the dihydroxyacetone site. The Proton acceptor role is filled by histidine 56. Histidine 218 functions as the Tele-hemiaminal-histidine intermediate in the catalytic mechanism.

Homodimer. The dihydroxyacetone kinase complex is composed of a homodimer of DhaM, a homodimer of DhaK and the subunit DhaL.

The protein localises to the cytoplasm. It catalyses the reaction dihydroxyacetone + phosphoenolpyruvate = dihydroxyacetone phosphate + pyruvate. It functions in the pathway polyol metabolism; glycerol degradation. Dihydroxyacetone binding subunit of the dihydroxyacetone kinase, which is responsible for the phosphoenolpyruvate (PEP)-dependent phosphorylation of dihydroxyacetone via a phosphoryl group transfer from DhaL-ATP. The sequence is that of PTS-dependent dihydroxyacetone kinase 1, dihydroxyacetone-binding subunit DhaK from Listeria innocua serovar 6a (strain ATCC BAA-680 / CLIP 11262).